The primary structure comprises 386 residues: S-(hydroxymethyl)glutathione dehydrogenase (386 aa).

An N-acetylserine modification is found at serine 2. Residue cysteine 49 participates in Zn(2+) binding. Histidine 50 is a binding site for NAD(+). 7 residues coordinate Zn(2+): histidine 71, glutamate 72, cysteine 101, cysteine 104, cysteine 107, cysteine 115, and cysteine 179. Residues 204 to 209, aspartate 228, 300 to 302, and 325 to 327 each bind NAD(+); these read GCGTVG, IGV, and SAF.

This sequence belongs to the zinc-containing alcohol dehydrogenase family. Class-III subfamily. Requires Zn(2+) as cofactor.

Its subcellular location is the cytoplasm. The protein resides in the mitochondrion. It catalyses the reaction a primary alcohol + NAD(+) = an aldehyde + NADH + H(+). The enzyme catalyses a secondary alcohol + NAD(+) = a ketone + NADH + H(+). The catalysed reaction is S-(hydroxymethyl)glutathione + NADP(+) = S-formylglutathione + NADPH + H(+). It carries out the reaction S-(hydroxymethyl)glutathione + NAD(+) = S-formylglutathione + NADH + H(+). It catalyses the reaction S-nitrosoglutathione + NADH + H(+) = S-(hydroxysulfenamide)glutathione + NAD(+). In terms of biological role, oxidizes long-chain alcohols and, in the presence of glutathione, is able to oxidize formaldehyde. Is responsible for yeast resistance to formaldehyde. Also acts as a S-nitroso-glutathione reductase by catalyzing the NADH-dependent reduction of S-nitrosoglutathione, thereby regulating protein S-nitrosylation. The protein is S-(hydroxymethyl)glutathione dehydrogenase (SFA1) of Saccharomyces cerevisiae (strain ATCC 204508 / S288c) (Baker's yeast).